Reading from the N-terminus, the 354-residue chain is Protein ECM8 (354 aa).

Its function is as follows. May be involved in cell wall organization and biogenesis. The sequence is that of Protein ECM8 (ECM8) from Saccharomyces cerevisiae (strain ATCC 204508 / S288c) (Baker's yeast).